The following is a 267-amino-acid chain: Small ribosomal subunit protein uS3 (267 aa).

The KH type-2 domain occupies Ile38 to Lys106. A disordered region spans residues Thr215–Gly267. Over residues Gly222–Ser233 the composition is skewed to basic and acidic residues. Low complexity predominate over residues Ser238–Ala256.

Belongs to the universal ribosomal protein uS3 family. In terms of assembly, part of the 30S ribosomal subunit. Forms a tight complex with proteins S10 and S14.

Its function is as follows. Binds the lower part of the 30S subunit head. Binds mRNA in the 70S ribosome, positioning it for translation. The sequence is that of Small ribosomal subunit protein uS3 from Nocardia farcinica (strain IFM 10152).